We begin with the raw amino-acid sequence, 83 residues long: Cell division topological specificity factor (83 aa).

Belongs to the MinE family.

Functionally, prevents the cell division inhibition by proteins MinC and MinD at internal division sites while permitting inhibition at polar sites. This ensures cell division at the proper site by restricting the formation of a division septum at the midpoint of the long axis of the cell. This chain is Cell division topological specificity factor, found in Bordetella parapertussis (strain 12822 / ATCC BAA-587 / NCTC 13253).